Reading from the N-terminus, the 189-residue chain is Photosystem I assembly protein Ycf4 (189 aa).

Helical transmembrane passes span 29-49 and 69-89; these read WATI…SSYL and LVMG…WLVI.

This sequence belongs to the Ycf4 family.

It is found in the cellular thylakoid membrane. Functionally, seems to be required for the assembly of the photosystem I complex. In Nostoc punctiforme (strain ATCC 29133 / PCC 73102), this protein is Photosystem I assembly protein Ycf4.